A 208-amino-acid chain; its full sequence is Small ribosomal subunit protein eS8 (208 aa).

The tract at residues 1–27 is disordered; the sequence is MGISRDNWHKRRKTGGKRKPYHKKRKY. A lipid anchor (N-myristoyl glycine) is attached at Gly2. A compositionally biased stretch (basic residues) spans 8 to 26; sequence WHKRRKTGGKRKPYHKKRK. 2 positions are modified to N6-acetyllysine: Lys37 and Lys128. Thr130 carries the phosphothreonine modification. Ser160 bears the Phosphoserine mark. Glycyl lysine isopeptide (Lys-Gly) (interchain with G-Cter in SUMO2) cross-links involve residues Lys170 and Lys193.

The protein belongs to the eukaryotic ribosomal protein eS8 family. In terms of assembly, component of the small ribosomal subunit. Identified in a IGF2BP1-dependent mRNP granule complex containing untranslated mRNAs. Part of the small subunit (SSU) processome, composed of more than 70 proteins and the RNA chaperone small nucleolar RNA (snoRNA) U3.

Its subcellular location is the cytoplasm. It is found in the membrane. It localises to the nucleus. The protein localises to the nucleolus. In terms of biological role, component of the small ribosomal subunit. The ribosome is a large ribonucleoprotein complex responsible for the synthesis of proteins in the cell. Part of the small subunit (SSU) processome, first precursor of the small eukaryotic ribosomal subunit. During the assembly of the SSU processome in the nucleolus, many ribosome biogenesis factors, an RNA chaperone and ribosomal proteins associate with the nascent pre-rRNA and work in concert to generate RNA folding, modifications, rearrangements and cleavage as well as targeted degradation of pre-ribosomal RNA by the RNA exosome. The protein is Small ribosomal subunit protein eS8 (RPS8) of Oryctolagus cuniculus (Rabbit).